Here is a 326-residue protein sequence, read N- to C-terminus: dTDP-4-dehydro-6-deoxy-D-allose reductase (326 aa).

NADP(+) contacts are provided by residues 15 to 21 and 129 to 132; these read GALGFIG and MSSS. The active-site Proton donor/acceptor is the tyrosine 160. NADP(+) contacts are provided by residues lysine 164 and 187–190; that span reads PGNV.

The protein belongs to the NAD(P)-dependent epimerase/dehydratase family.

It carries out the reaction dTDP-6-deoxy-alpha-D-allose + NAD(+) = dTDP-4-dehydro-6-deoxy-alpha-D-allose + NADH + H(+). It catalyses the reaction dTDP-6-deoxy-alpha-D-allose + NADP(+) = dTDP-4-dehydro-6-deoxy-alpha-D-allose + NADPH + H(+). Functionally, catalyzes the stereospecific reduction of the C-4 keto group of dTDP-4-dehydro-6-deoxy-D-allose, leading to dTDP-6-deoxy-D-allose, an intermediate in the biosynthesis of the mycinose moiety of the chalcomycin antibiotic. The polypeptide is dTDP-4-dehydro-6-deoxy-D-allose reductase (chmD) (Streptomyces bikiniensis).